The primary structure comprises 62 residues: UPF0434 protein SPO3421 (62 aa).

The protein belongs to the UPF0434 family.

The polypeptide is UPF0434 protein SPO3421 (Ruegeria pomeroyi (strain ATCC 700808 / DSM 15171 / DSS-3) (Silicibacter pomeroyi)).